Reading from the N-terminus, the 59-residue chain is UPF0434 protein lpl1884 (59 aa).

The protein belongs to the UPF0434 family.

This chain is UPF0434 protein lpl1884, found in Legionella pneumophila (strain Lens).